The sequence spans 342 residues: Isopentenyl-diphosphate delta-isomerase (342 aa).

11–12 (RK) contacts substrate. Residues Ser-68, 69 to 71 (SMT), Ser-99, and Asn-128 contribute to the FMN site. 99 to 101 (SQR) serves as a coordination point for substrate. Position 162 (Gln-162) interacts with substrate. Mg(2+) is bound at residue Glu-163. Residues Lys-194, Ser-219, Thr-224, 275 to 277 (GVR), and 296 to 297 (AK) each bind FMN.

It belongs to the IPP isomerase type 2 family. In terms of assembly, homooctamer. Dimer of tetramers. FMN serves as cofactor. Requires NADPH as cofactor. Mg(2+) is required as a cofactor.

Its subcellular location is the cytoplasm. The catalysed reaction is isopentenyl diphosphate = dimethylallyl diphosphate. Involved in the biosynthesis of isoprenoids. Catalyzes the 1,3-allylic rearrangement of the homoallylic substrate isopentenyl (IPP) to its allylic isomer, dimethylallyl diphosphate (DMAPP). In Legionella pneumophila (strain Corby), this protein is Isopentenyl-diphosphate delta-isomerase.